The sequence spans 382 residues: MKITHITTYRLPPRWMFLKIETDEGVVGWGEPVIESRARTVEAAVHEFADYLIGKDPARINDLWQVMYRAGFYRGGPIMMSAIAGIDQALWDIKGKVLNAPVWQLMGGLVRDKIKAYSWVGGDRPADVIDGIEKLRGIGFDTFKLNGCEEMGVIDNSRAVDAAVNTVAQIREAFGSEIEFGLDFHGRVSAPMAKVLIKELEPYRPLFIEEPVLAEQAEYYPRLAAQTHIPIAAGERMFSRFEFKRVLDAGGLAILQPDLSHAGGITECYKIAGMAEAYDVALAPHCPLGPIALAACLHIDFVSRNAVFQEQSMGIHYNKGAELLDFVKNKEDFSMDGGFFKPLTKPGLGVDIDEARVIELSKSAPDWRNPLWRHADGSVAEW.

A Mg(2+)-binding site is contributed by aspartate 183. Histidine 185 functions as the Proton donor in the catalytic mechanism. 2 residues coordinate Mg(2+): glutamate 209 and glutamate 235. Catalysis depends on histidine 285, which acts as the Proton acceptor.

Belongs to the mandelate racemase/muconate lactonizing enzyme family. GalD subfamily. The cofactor is Mg(2+).

The catalysed reaction is D-galactonate = 2-dehydro-3-deoxy-D-galactonate + H2O. It participates in carbohydrate acid metabolism; D-galactonate degradation; D-glyceraldehyde 3-phosphate and pyruvate from D-galactonate: step 1/3. Catalyzes the dehydration of D-galactonate to 2-keto-3-deoxy-D-galactonate. This Salmonella choleraesuis (strain SC-B67) protein is D-galactonate dehydratase.